The following is a 398-amino-acid chain: uncharacterized protein (398 aa).

The protein belongs to the glycosyltransferase 2 family.

This is an uncharacterized protein from Escherichia coli (strain K12).